A 155-amino-acid polypeptide reads, in one-letter code: MPKKFYVSWDNLQREARRLARRQLPVSQWKGIIAVSRGGLVPAALMARELGIRNVETLCISSYDHNNQRDLVVVKAATTAGDGEGWLVVEDLVDTGTTAKAIRELYPKAKFIAIFAKPMGEQLLDDFEVAIPQDTWIEQPWDMALEFATPICDEE.

5-phospho-alpha-D-ribose 1-diphosphate contacts are provided by residues 37–38 (RG), arginine 69, and 90–98 (EDLVDTGTT). Arginine 69 lines the GMP pocket. Aspartate 91 is a binding site for Mg(2+). Guanine contacts are provided by aspartate 94 and isoleucine 137. Xanthine is bound by residues aspartate 94 and isoleucine 137. GMP is bound by residues 94 to 98 (DTGTT) and 136 to 137 (WI).

This sequence belongs to the purine/pyrimidine phosphoribosyltransferase family. XGPT subfamily. In terms of assembly, homotetramer. Mg(2+) serves as cofactor.

It localises to the cell inner membrane. It carries out the reaction GMP + diphosphate = guanine + 5-phospho-alpha-D-ribose 1-diphosphate. The enzyme catalyses XMP + diphosphate = xanthine + 5-phospho-alpha-D-ribose 1-diphosphate. The catalysed reaction is IMP + diphosphate = hypoxanthine + 5-phospho-alpha-D-ribose 1-diphosphate. It participates in purine metabolism; GMP biosynthesis via salvage pathway; GMP from guanine: step 1/1. It functions in the pathway purine metabolism; XMP biosynthesis via salvage pathway; XMP from xanthine: step 1/1. Functionally, purine salvage pathway enzyme that catalyzes the transfer of the ribosyl-5-phosphate group from 5-phospho-alpha-D-ribose 1-diphosphate (PRPP) to the N9 position of the 6-oxopurines guanine and xanthine to form the corresponding ribonucleotides GMP (guanosine 5'-monophosphate) and XMP (xanthosine 5'-monophosphate), with the release of PPi. To a lesser extent, also acts on hypoxanthine. In Aeromonas hydrophila subsp. hydrophila (strain ATCC 7966 / DSM 30187 / BCRC 13018 / CCUG 14551 / JCM 1027 / KCTC 2358 / NCIMB 9240 / NCTC 8049), this protein is Xanthine-guanine phosphoribosyltransferase.